Here is a 429-residue protein sequence, read N- to C-terminus: Enolase (429 aa).

Residue Gln167 participates in (2R)-2-phosphoglycerate binding. Glu209 (proton donor) is an active-site residue. Mg(2+) is bound by residues Asp246, Glu289, and Asp316. (2R)-2-phosphoglycerate is bound by residues Lys341, Arg370, Ser371, and Lys392. Lys341 (proton acceptor) is an active-site residue.

This sequence belongs to the enolase family. Component of the RNA degradosome, a multiprotein complex involved in RNA processing and mRNA degradation. Requires Mg(2+) as cofactor.

The protein localises to the cytoplasm. Its subcellular location is the secreted. It is found in the cell surface. It catalyses the reaction (2R)-2-phosphoglycerate = phosphoenolpyruvate + H2O. It participates in carbohydrate degradation; glycolysis; pyruvate from D-glyceraldehyde 3-phosphate: step 4/5. Functionally, catalyzes the reversible conversion of 2-phosphoglycerate (2-PG) into phosphoenolpyruvate (PEP). It is essential for the degradation of carbohydrates via glycolysis. In Ectopseudomonas mendocina (strain ymp) (Pseudomonas mendocina), this protein is Enolase.